A 306-amino-acid chain; its full sequence is Ribonuclease BN (306 aa).

Zn(2+)-binding residues include histidine 64, histidine 66, aspartate 68, histidine 69, histidine 141, aspartate 212, and histidine 270. The active-site Proton acceptor is aspartate 68.

This sequence belongs to the RNase Z family. RNase BN subfamily. In terms of assembly, homodimer. It depends on Zn(2+) as a cofactor.

Functionally, zinc phosphodiesterase, which has both exoribonuclease and endoribonuclease activities. This Klebsiella pneumoniae subsp. pneumoniae (strain ATCC 700721 / MGH 78578) protein is Ribonuclease BN.